The following is a 77-amino-acid chain: Small ribosomal subunit protein bS20 (77 aa).

The protein belongs to the bacterial ribosomal protein bS20 family.

In terms of biological role, binds directly to 16S ribosomal RNA. The chain is Small ribosomal subunit protein bS20 from Lactococcus lactis subsp. cremoris (strain MG1363).